A 564-amino-acid chain; its full sequence is NAC domain-containing protein 16 (564 aa).

In terms of domain architecture, NAC spans 16 to 166; it reads SAPGFRFHPT…YYALYKLYKK (151 aa). A DNA-binding region spans residues 115 to 172; the sequence is VGLKKTLVFYRGRAPNGERTDWVMHEYTMDEEELGRCKNAKEYYALYKLYKKSGAGPK. Residues 535 to 555 form a helical membrane-spanning segment; sequence FLLLSIMGALCAIFWVFKATV.

In terms of tissue distribution, expressed in roots, rosette leaves, shoot apex, stems and flowers.

The protein resides in the membrane. It is found in the nucleus. Transcriptional activator activated by proteolytic cleavage through regulated intramembrane proteolysis (RIP). Transcriptional activator that promotes leaf senescence by up-regulating senescence-associated genes in response to developmental and stress-induced senescence signals. Functions in salt and oxidative stress-responsive signaling pathways. Binds to the promoter of NAC029/NAP and NAC059/ORS1 genes. This chain is NAC domain-containing protein 16, found in Arabidopsis thaliana (Mouse-ear cress).